The following is an 86-amino-acid chain: Large ribosomal subunit protein bL31 (86 aa).

Residues 66–86 are disordered; sequence GMGSADSATSQETKEAKESDK. Residues 77–86 show a composition bias toward basic and acidic residues; sequence ETKEAKESDK.

The protein belongs to the bacterial ribosomal protein bL31 family. Type A subfamily. Part of the 50S ribosomal subunit.

Functionally, binds the 23S rRNA. In Prochlorococcus marinus (strain MIT 9515), this protein is Large ribosomal subunit protein bL31.